A 339-amino-acid polypeptide reads, in one-letter code: DNA-directed RNA polymerase subunit alpha (339 aa).

The interval 1–233 (MVREEVAGST…DLFLPFLHAE (233 aa)) is alpha N-terminal domain (alpha-NTD). The tract at residues 264 to 339 (KKGIPLNCIF…IDLLKNKLSF (76 aa)) is alpha C-terminal domain (alpha-CTD).

It belongs to the RNA polymerase alpha chain family. In plastids the minimal PEP RNA polymerase catalytic core is composed of four subunits: alpha, beta, beta', and beta''. When a (nuclear-encoded) sigma factor is associated with the core the holoenzyme is formed, which can initiate transcription.

It localises to the plastid. It is found in the chloroplast. It catalyses the reaction RNA(n) + a ribonucleoside 5'-triphosphate = RNA(n+1) + diphosphate. Functionally, DNA-dependent RNA polymerase catalyzes the transcription of DNA into RNA using the four ribonucleoside triphosphates as substrates. This Psathyrostachys stoloniformis protein is DNA-directed RNA polymerase subunit alpha.